A 56-amino-acid polypeptide reads, in one-letter code: Protein hunchback (56 aa).

C2H2-type zinc fingers lie at residues 1-5 (HLRNH), 11-33 (FRCD…LKSH), and 39-56 (YRCA…SLKL).

The protein belongs to the hunchback C2H2-type zinc-finger protein family.

The protein localises to the nucleus. In terms of biological role, gap class segmentation protein that controls development of head structures. The protein is Protein hunchback (hb) of Locusta migratoria (Migratory locust).